The chain runs to 91 residues: Small ribosomal subunit protein bS20 (91 aa).

The interval 1 to 26 (MANLKSSKKDIRRTARRKERNGEDRT) is disordered.

Belongs to the bacterial ribosomal protein bS20 family.

Binds directly to 16S ribosomal RNA. This is Small ribosomal subunit protein bS20 from Leptospira biflexa serovar Patoc (strain Patoc 1 / Ames).